The primary structure comprises 276 residues: Undecaprenyl-diphosphatase (276 aa).

Helical transmembrane passes span 43-63, 85-105, 109-129, 183-203, 218-238, and 254-274; these read RAMAFNIIIQLGAILAVVWEF, LNLLIAFMPAVVLGVIFADTI, LFNAITVATALVVGGVIMLWA, AATEFSFFLAMPTMVGAAVYS, VFAIGFITSFVFAMIAVRALL, and IAFGLLILATWQFGWIDWASA.

This sequence belongs to the UppP family.

Its subcellular location is the cell inner membrane. It carries out the reaction di-trans,octa-cis-undecaprenyl diphosphate + H2O = di-trans,octa-cis-undecaprenyl phosphate + phosphate + H(+). Its function is as follows. Catalyzes the dephosphorylation of undecaprenyl diphosphate (UPP). Confers resistance to bacitracin. This Pseudomonas syringae pv. tomato (strain ATCC BAA-871 / DC3000) protein is Undecaprenyl-diphosphatase.